The following is an 803-amino-acid chain: Rho guanine nucleotide exchange factor 7 (803 aa).

An N-acetylmethionine modification is found at Met1. Residues 1–133 (MNSAEQTVTW…SLVTLNKVTA (133 aa)) form the Calponin-homology (CH) domain. Asn2 is modified (N-acetylthreonine). Phosphoserine is present on residues Ser153 and Ser176. The SH3 domain occupies 184–243 (NNQLVVRAKFNFQQTNEDELSFSKGDVIHVTRVEEGGWWEGTLNGRTGWFPSNYVREVKA). Phosphoserine is present on residues Ser249 and Ser257. Residues 271-451 (YYNVVLQNIL…KNLSAQCQEV (181 aa)) enclose the DH domain. One can recognise a PH domain in the interval 473–578 (DIKTLGNVTY…WVEHLQKQTK (106 aa)). Residues Ser518, Cys560, and Val579 each carry the phosphoserine modification. Residues 580-655 (TSVGNPTIKP…TPKPWSLSCL (76 aa)) are disordered. Positions 593–606 (PSHTLPSHPVTPSS) are enriched in polar residues. Residues Lys645 and Ser664 each carry the phosphoserine modification. Over residues 678-690 (KTMKKLLPKRKPE) the composition is skewed to basic residues. Disordered stretches follow at residues 678 to 704 (KTMK…RKST) and 748 to 773 (DDQP…LSED). Basic and acidic residues predominate over residues 691–700 (RKPSDEEFAS). Ser694 bears the Phosphoserine; by CaMK1 mark. The span at 752 to 765 (SLDSLGRRSSLSRL) shows a compositional bias: low complexity.

As to quaternary structure, interacts with PAK kinases through the SH3 domain. Interacts with GIT1 and TGFB1I1. Interacts with PTK2/FAK1 and RAC1. Interacts with ITCH and PARVB. Interacts with unphosphorylated PAK1. Interacts with SCRIB; interaction is direct and may play a role in regulation of apoptosis. Interacts with FRMPD4 (via N-terminus). Interacts with CaMK1. Interacts with BIN2. Interacts with YWHAZ. Interacts (via PH domain) with NOX1 (via FAD-binding FR-type domain). Interacts with SNX27. Post-translationally, phosphorylated by PTK2/FAK1; this promotes interaction with RAC1. Phosphorylated on Ser-694 by CaMK1; enhancement of GEF activity and downstream activation of RAC1.

The protein resides in the cell junction. Its subcellular location is the focal adhesion. The protein localises to the cell projection. It is found in the ruffle. It localises to the cytoplasm. The protein resides in the cell cortex. Its subcellular location is the lamellipodium. Acts as a RAC1 guanine nucleotide exchange factor (GEF) and can induce membrane ruffling. Functions in cell migration, attachment and cell spreading. Promotes targeting of RAC1 to focal adhesions. May function as a positive regulator of apoptosis. Downstream of NMDA receptors and CaMKK-CaMK1 signaling cascade, promotes the formation of spines and synapses in hippocampal neurons. The chain is Rho guanine nucleotide exchange factor 7 (ARHGEF7) from Homo sapiens (Human).